Reading from the N-terminus, the 310-residue chain is Ribosomal protein uL3 glutamine methyltransferase (310 aa).

This sequence belongs to the protein N5-glutamine methyltransferase family. PrmB subfamily.

The catalysed reaction is L-glutaminyl-[ribosomal protein uL3] + S-adenosyl-L-methionine = N(5)-methyl-L-glutaminyl-[ribosomal protein uL3] + S-adenosyl-L-homocysteine + H(+). Methylates large ribosomal subunit protein uL3 on a specific glutamine residue. This chain is Ribosomal protein uL3 glutamine methyltransferase, found in Yersinia pestis.